The primary structure comprises 312 residues: Malate dehydrogenase (312 aa).

Residues 7–13 (GAAGGIG) and Asp-34 each bind NAD(+). 2 residues coordinate substrate: Arg-81 and Arg-87. Residues Asn-94 and 117–119 (ITN) contribute to the NAD(+) site. Asn-119 and Arg-153 together coordinate substrate. The Proton acceptor role is filled by His-177. Met-227 contacts NAD(+).

Belongs to the LDH/MDH superfamily. MDH type 1 family. As to quaternary structure, homodimer.

The enzyme catalyses (S)-malate + NAD(+) = oxaloacetate + NADH + H(+). Functionally, catalyzes the reversible oxidation of malate to oxaloacetate. This Shigella flexneri serotype 5b (strain 8401) protein is Malate dehydrogenase.